A 310-amino-acid polypeptide reads, in one-letter code: Phosphoribosylaminoimidazole-succinocarboxamide synthase (310 aa).

Belongs to the SAICAR synthetase family.

It carries out the reaction 5-amino-1-(5-phospho-D-ribosyl)imidazole-4-carboxylate + L-aspartate + ATP = (2S)-2-[5-amino-1-(5-phospho-beta-D-ribosyl)imidazole-4-carboxamido]succinate + ADP + phosphate + 2 H(+). It participates in purine metabolism; IMP biosynthesis via de novo pathway; 5-amino-1-(5-phospho-D-ribosyl)imidazole-4-carboxamide from 5-amino-1-(5-phospho-D-ribosyl)imidazole-4-carboxylate: step 1/2. This chain is Phosphoribosylaminoimidazole-succinocarboxamide synthase, found in Xanthomonas campestris pv. campestris (strain B100).